Consider the following 138-residue polypeptide: Protein PsiE homolog (138 aa).

A run of 4 helical transmembrane segments spans residues 14-34 (LQAL…GLLI), 56-76 (YEML…ALII), 84-104 (HFPL…LIII), and 109-129 (AIST…FFIV).

The protein belongs to the PsiE family.

Its subcellular location is the cell membrane. This is Protein PsiE homolog from Bacillus velezensis (strain DSM 23117 / BGSC 10A6 / LMG 26770 / FZB42) (Bacillus amyloliquefaciens subsp. plantarum).